A 663-amino-acid polypeptide reads, in one-letter code: Nuclear receptor-binding protein homolog (663 aa).

A compositionally biased stretch (low complexity) spans 1 to 14; sequence MSNSQANAGSSGSA. Residues 1–112 are disordered; the sequence is MSNSQANAGS…SEDESEILEE (112 aa). Polar residues predominate over residues 19–46; sequence LNPSGSATLVPNLTTTNASSQATPASTI. Composition is skewed to low complexity over residues 47–57 and 81–94; these read PQQQQPQQSQP and VVVA…NLDS. Residues 101 to 111 show a composition bias toward acidic residues; it reads DDSEDESEILE. The Protein kinase domain occupies 122 to 392; it reads REEVDQRDVP…ANDLLFHPLL (271 aa). 2 disordered regions span residues 481–505 and 638–663; these read PNFR…EPVD and YVPQ…TTSN. Phosphoserine is present on residues Ser489, Ser495, and Ser498. Thr500 bears the Phosphothreonine mark. The span at 641-652 shows a compositional bias: low complexity; the sequence is QDQQQYQQQQQE.

The protein belongs to the protein kinase superfamily. Ser/Thr protein kinase family.

The protein resides in the cytoplasm. It is found in the cell cortex. Its function is as follows. May play a role in subcellular trafficking between the endoplasmic reticulum and Golgi apparatus. This is Nuclear receptor-binding protein homolog from Drosophila pseudoobscura pseudoobscura (Fruit fly).